The primary structure comprises 221 residues: 7-cyano-7-deazaguanine synthase (221 aa).

ATP is bound at residue 7-17; it reads LSGGLDSAVSL. The Zn(2+) site is built by Cys192, Cys200, Cys203, and Cys206.

It belongs to the QueC family. In terms of assembly, homodimer. The cofactor is Zn(2+).

It carries out the reaction 7-carboxy-7-deazaguanine + NH4(+) + ATP = 7-cyano-7-deazaguanine + ADP + phosphate + H2O + H(+). It participates in purine metabolism; 7-cyano-7-deazaguanine biosynthesis. Functionally, catalyzes the ATP-dependent conversion of 7-carboxy-7-deazaguanine (CDG) to 7-cyano-7-deazaguanine (preQ(0)). The sequence is that of 7-cyano-7-deazaguanine synthase from Pelotomaculum thermopropionicum (strain DSM 13744 / JCM 10971 / SI).